Consider the following 68-residue polypeptide: MKKGIHPELKKARIVCACGAVYETLSTKEYMTVEICSKCHPFFTGQRKFVDTEGRVERFAKKYNWEIK.

Cys-16, Cys-18, Cys-36, and Cys-39 together coordinate Zn(2+).

Belongs to the bacterial ribosomal protein bL31 family. Type A subfamily. In terms of assembly, part of the 50S ribosomal subunit. Requires Zn(2+) as cofactor.

Its function is as follows. Binds the 23S rRNA. This chain is Large ribosomal subunit protein bL31, found in Dictyoglomus thermophilum (strain ATCC 35947 / DSM 3960 / H-6-12).